A 216-amino-acid polypeptide reads, in one-letter code: GTP cyclohydrolase-2 (216 aa).

GTP is bound at residue 51–55 (RIHSE). Cys56, Cys67, and Cys69 together coordinate Zn(2+). GTP is bound by residues Gln72, 94 to 96 (EGR), and Thr116. Asp128 serves as the catalytic Proton acceptor. The active-site Nucleophile is the Arg130. Residues Thr151 and Lys156 each contribute to the GTP site.

The protein belongs to the GTP cyclohydrolase II family. Requires Zn(2+) as cofactor.

It catalyses the reaction GTP + 4 H2O = 2,5-diamino-6-hydroxy-4-(5-phosphoribosylamino)-pyrimidine + formate + 2 phosphate + 3 H(+). It participates in cofactor biosynthesis; riboflavin biosynthesis; 5-amino-6-(D-ribitylamino)uracil from GTP: step 1/4. Its function is as follows. Catalyzes the conversion of GTP to 2,5-diamino-6-ribosylamino-4(3H)-pyrimidinone 5'-phosphate (DARP), formate and pyrophosphate. The polypeptide is GTP cyclohydrolase-2 (Haemophilus influenzae (strain 86-028NP)).